The sequence spans 96 residues: MSPKNNHDPSSSGDSGNTNVQEADLQEMEDVNNSLDALSCALDAVEQRTDDIMSQLRELLNSNREIRRLIAEENDNAPESGDDNMDGQAGSEAAPK.

Disordered regions lie at residues 1-28 (MSPK…LQEM) and 70-96 (IAEE…AAPK). A compositionally biased stretch (polar residues) spans 8–21 (DPSSSGDSGNTNVQ). Residues 21–77 (QEADLQEMEDVNNSLDALSCALDAVEQRTDDIMSQLRELLNSNREIRRLIAEENDNA) adopt a coiled-coil conformation. Residues 72–85 (EENDNAPESGDDNM) are compositionally biased toward acidic residues.

It belongs to the UPF0184 (EST00098) family.

The chain is UPF0184 protein CG14818 from Drosophila melanogaster (Fruit fly).